The following is a 270-amino-acid chain: Diaminopimelate epimerase (270 aa).

Positions 15, 49, and 66 each coordinate substrate. Residue C75 is the Proton donor of the active site. Substrate is bound by residues 76 to 77 (GN), N155, N187, and 204 to 205 (ER). The active-site Proton acceptor is C213. A substrate-binding site is contributed by 214–215 (GS).

It belongs to the diaminopimelate epimerase family. In terms of assembly, homodimer.

It is found in the cytoplasm. It catalyses the reaction (2S,6S)-2,6-diaminopimelate = meso-2,6-diaminopimelate. The protein operates within amino-acid biosynthesis; L-lysine biosynthesis via DAP pathway; DL-2,6-diaminopimelate from LL-2,6-diaminopimelate: step 1/1. Its function is as follows. Catalyzes the stereoinversion of LL-2,6-diaminopimelate (L,L-DAP) to meso-diaminopimelate (meso-DAP), a precursor of L-lysine and an essential component of the bacterial peptidoglycan. The polypeptide is Diaminopimelate epimerase (Rickettsia africae (strain ESF-5)).